The primary structure comprises 276 residues: NH(3)-dependent NAD(+) synthetase (276 aa).

An ATP-binding site is contributed by 43–50 (GISGGVDS). Asp49 provides a ligand contact to Mg(2+). Residue Arg146 participates in deamido-NAD(+) binding. Position 166 (Thr166) interacts with ATP. Position 171 (Glu171) interacts with Mg(2+). The deamido-NAD(+) site is built by Lys179 and Asp186. ATP-binding residues include Lys195 and Thr217. Position 266 to 267 (266 to 267 (HK)) interacts with deamido-NAD(+).

This sequence belongs to the NAD synthetase family. As to quaternary structure, homodimer.

It catalyses the reaction deamido-NAD(+) + NH4(+) + ATP = AMP + diphosphate + NAD(+) + H(+). It participates in cofactor biosynthesis; NAD(+) biosynthesis; NAD(+) from deamido-NAD(+) (ammonia route): step 1/1. In terms of biological role, catalyzes the ATP-dependent amidation of deamido-NAD to form NAD. Uses ammonia as a nitrogen source. The chain is NH(3)-dependent NAD(+) synthetase from Shewanella oneidensis (strain ATCC 700550 / JCM 31522 / CIP 106686 / LMG 19005 / NCIMB 14063 / MR-1).